The sequence spans 609 residues: Invertase (609 aa).

Residues 1 to 14 (MLKLLSLMVPLASA) form the signal peptide. 3 N-linked (GlcNAc...) asparagine glycosylation sites follow: Asn23, Asn32, and Asn36. Substrate is bound by residues 56–59 (WMND), Gln77, and 119–120 (FS). Asp59 is a catalytic residue. 3 N-linked (GlcNAc...) asparagine glycosylation sites follow: Asn128, Asn129, and Asn135. A substrate-binding site is contributed by 187 to 188 (RD). Residues Asn227 and Asn233 are each glycosylated (N-linked (GlcNAc...) asparagine). Glu245 serves as a coordination point for substrate. N-linked (GlcNAc...) asparagine glycosylation is found at Asn257, Asn267, Asn277, Asn284, Asn291, Asn298, Asn303, and Asn345. Trp389 serves as a coordination point for substrate. 8 N-linked (GlcNAc...) asparagine glycosylation sites follow: Asn409, Asn420, Asn440, Asn448, Asn452, Asn477, Asn545, and Asn566.

It belongs to the glycosyl hydrolase 32 family.

It carries out the reaction Hydrolysis of terminal non-reducing beta-D-fructofuranoside residues in beta-D-fructofuranosides.. The protein is Invertase (INV1) of Kluyveromyces lactis (strain ATCC 8585 / CBS 2359 / DSM 70799 / NBRC 1267 / NRRL Y-1140 / WM37) (Yeast).